The sequence spans 431 residues: FAD-dependent monooxygenase nodY1 (431 aa).

The first 21 residues, 1–21 (MASTGVSVIVVGLGLAGLTTA), serve as a signal peptide directing secretion. The FAD site is built by Glu-35 and Arg-110. The active site involves Arg-188. Position 313 (Asp-313) interacts with FAD.

The protein belongs to the paxM FAD-dependent monooxygenase family. FAD is required as a cofactor.

It functions in the pathway secondary metabolite biosynthesis. FAD-dependent monooxygenase; part of the gene cluster that mediates the biosynthesis of the indole diterpenes nodulisporic acids (NA). Nodulisporic acid A (NAA) and its chemically modified derivatives are of particular significance because of their highly potent insecticidal activity against blood-feeding arthropods and lack of observable adverse effects on mammals, in particular the tremogenicity associated with the paspaline-derived IDTs is not observed. The geranylgeranyl diphosphate (GGPP) synthase ggs1, localized outside of the cluster, is proposed to catalyze the first step in nodulisporic acid biosynthesis via conversion of farnesyl pyrophosphate and isopentyl pyrophosphate into geranylgeranyl pyrophosphate (GGPP). Condensation of indole-3-glycerol phosphate with GGPP by the prenyl transferase nodC then forms 3-geranylgeranylindole (3-GGI). Epoxidation by the FAD-dependent monooxygenase nodM leads to a single-epoxidized-GGI that is substrate of the terpene cyclase nodB for cyclization to yield emindole SB. The terminal methyl carbon, C28, of emindole SB is then oxidized by the cytochrome P450 monooxygenase nodW to produce nodulisporic acid F (NAF), the pentacyclic core of NAA. NAF is converted to nodulisporic acid E (NAE) via prenylation. This step is probably performed by one of the indole diterpene prenyltransferases nodD1 or nodD2. Several oxidation steps performed by the FAD-linked oxidoreductase nodO and one of the cytochrome P450 monooxygenase nodR, nodX or nodZ further convert NAE to nodulisporic acid D (NAD). NAD is substrate of cytochrome P450 monooxygenase nodJ to produce the precursor of nodulisporic acid C (NAC), converted to NAC by one of the indole diterpene prenyltransferases nodD1 or nodD2. The FAD-dependent monooxygenase nodY2 then oxidizes NAC to nodulisporic acid B (NAB). Finally NAB is converted to NAA by one of the cytochrome P450 monooxygenases nodR, nodX or nodZ. The polypeptide is FAD-dependent monooxygenase nodY1 (Hypoxylon pulicicidum).